We begin with the raw amino-acid sequence, 241 residues long: MPKYEIMTILDPKAEMAIIDNLLKTVFGDNSTEKLRKLETTNLAYPIRKSKIAQYFLVDLNAPTNLIEEFVRRANITREIWRYLIVNLDSEKGLNKKPKIRERNRKYTPRRDRFEKPNFRGNPKSRFDQQDQQATKNQQNFQQNQQNQTSQYRENSRQNQDDFQQVSSNQQNFGQNQQNQSGYHRENNRQNQENIHQNSKNHQNQTSQTQRNRRQYQPIKNPKFNQKEKENYNNKKPQSSN.

The span at 97-108 shows a compositional bias: basic residues; the sequence is KPKIRERNRKYT. The interval 97-241 is disordered; the sequence is KPKIRERNRK…YNNKKPQSSN (145 aa). Residues 109–118 show a composition bias toward basic and acidic residues; the sequence is PRRDRFEKPN. Low complexity-rich tracts occupy residues 130-151 and 161-182; these read QDQQ…QTSQ and DDFQ…NQSG. Residues 189 to 202 are compositionally biased toward polar residues; sequence RQNQENIHQNSKNH.

Belongs to the bacterial ribosomal protein bS6 family.

Binds together with bS18 to 16S ribosomal RNA. This chain is Small ribosomal subunit protein bS6, found in Mesomycoplasma hyopneumoniae (strain 232) (Mycoplasma hyopneumoniae).